We begin with the raw amino-acid sequence, 224 residues long: Heme response regulator HssR (224 aa).

The Response regulatory domain occupies 3-116; the sequence is KCLIVDDDYK…ELLFRIQAVL (114 aa). Asp52 is subject to 4-aspartylphosphate. A DNA-binding region (ompR/PhoB-type) is located at residues 124 to 222; the sequence is QDIIKLGNVT…VRGQGYRVIT (99 aa).

In terms of processing, phosphorylated by HssS.

The protein resides in the cytoplasm. In terms of biological role, member of the two-component regulatory system HssS/HssR involved in intracellular heme homeostasis and tempering of staphylococcal virulence. Phosphorylated HssR binds to a direct repeat sequence within hrtAB promoter and activates the expression of hrtAB, an efflux pump, in response to extracellular heme, hemin, hemoglobin or blood. The chain is Heme response regulator HssR (hssR) from Staphylococcus haemolyticus (strain JCSC1435).